The chain runs to 217 residues: Uridylate kinase (217 aa).

6–10 contacts ATP; sequence KLSGR. Gly-38 is a binding site for UMP. Gly-39 and Arg-43 together coordinate ATP. UMP contacts are provided by residues Asp-60 and 107–113; that span reads FQPGQST. Positions 134, 139, and 142 each coordinate ATP.

This sequence belongs to the UMP kinase family. Homohexamer.

The protein localises to the cytoplasm. The enzyme catalyses UMP + ATP = UDP + ADP. It functions in the pathway pyrimidine metabolism; CTP biosynthesis via de novo pathway; UDP from UMP (UMPK route): step 1/1. With respect to regulation, inhibited by UTP. In terms of biological role, catalyzes the reversible phosphorylation of UMP to UDP. The protein is Uridylate kinase of Pyrobaculum neutrophilum (strain DSM 2338 / JCM 9278 / NBRC 100436 / V24Sta) (Thermoproteus neutrophilus).